A 295-amino-acid polypeptide reads, in one-letter code: Small ribosomal subunit protein bS1 (295 aa).

3 S1 motif domains span residues 28–97, 115–179, and 193–261; these read GQLV…VSLR, GQTV…LSER, and GQLI…LSTK.

It belongs to the bacterial ribosomal protein bS1 family.

In terms of biological role, binds mRNA. This is Small ribosomal subunit protein bS1 (rpsA) from Synechococcus elongatus (strain ATCC 33912 / PCC 7942 / FACHB-805) (Anacystis nidulans R2).